The primary structure comprises 545 residues: CTP synthase (545 aa).

Residues 1–266 (MTTRYIFVTG…DDLVVKRFGL (266 aa)) form an amidoligase domain region. Serine 14 is a binding site for CTP. A UTP-binding site is contributed by serine 14. ATP is bound by residues 15 to 20 (SLGKGI) and aspartate 72. Residues aspartate 72 and glutamate 140 each contribute to the Mg(2+) site. CTP contacts are provided by residues 147–149 (DIE), 187–192 (KTKPTQ), and lysine 223. UTP contacts are provided by residues 187–192 (KTKPTQ) and lysine 223. ATP is bound at residue 239-241 (KDV). Residues 291-542 (VIGMVGKYIE…IAAASAHQKR (252 aa)) form the Glutamine amidotransferase type-1 domain. Residue glycine 352 participates in L-glutamine binding. Catalysis depends on cysteine 379, which acts as the Nucleophile; for glutamine hydrolysis. Residues 380 to 383 (LGMQ), glutamate 403, and arginine 470 each bind L-glutamine. Catalysis depends on residues histidine 515 and glutamate 517.

It belongs to the CTP synthase family. In terms of assembly, homotetramer.

It carries out the reaction UTP + L-glutamine + ATP + H2O = CTP + L-glutamate + ADP + phosphate + 2 H(+). The catalysed reaction is L-glutamine + H2O = L-glutamate + NH4(+). It catalyses the reaction UTP + NH4(+) + ATP = CTP + ADP + phosphate + 2 H(+). Its pathway is pyrimidine metabolism; CTP biosynthesis via de novo pathway; CTP from UDP: step 2/2. Allosterically activated by GTP, when glutamine is the substrate; GTP has no effect on the reaction when ammonia is the substrate. The allosteric effector GTP functions by stabilizing the protein conformation that binds the tetrahedral intermediate(s) formed during glutamine hydrolysis. Inhibited by the product CTP, via allosteric rather than competitive inhibition. Functionally, catalyzes the ATP-dependent amination of UTP to CTP with either L-glutamine or ammonia as the source of nitrogen. Regulates intracellular CTP levels through interactions with the four ribonucleotide triphosphates. The chain is CTP synthase from Shewanella putrefaciens (strain CN-32 / ATCC BAA-453).